The sequence spans 383 residues: N-acetyldiaminopimelate deacetylase (383 aa).

Asp72 is an active-site residue. The active-site Proton acceptor is the Glu131.

This sequence belongs to the peptidase M20A family. N-acetyldiaminopimelate deacetylase subfamily.

It carries out the reaction N-acetyl-(2S,6S)-2,6-diaminopimelate + H2O = (2S,6S)-2,6-diaminopimelate + acetate. It participates in amino-acid biosynthesis; L-lysine biosynthesis via DAP pathway; LL-2,6-diaminopimelate from (S)-tetrahydrodipicolinate (acetylase route): step 3/3. Functionally, catalyzes the conversion of N-acetyl-diaminopimelate to diaminopimelate and acetate. The polypeptide is N-acetyldiaminopimelate deacetylase (Lacticaseibacillus paracasei (strain ATCC 334 / BCRC 17002 / CCUG 31169 / CIP 107868 / KCTC 3260 / NRRL B-441) (Lactobacillus paracasei)).